Here is a 589-residue protein sequence, read N- to C-terminus: PAN2-PAN3 deadenylation complex subunit pan3 (589 aa).

Residues 1–32 (MSVRKNSPASPKPTSRSRESSRSPSVTDLKDH) form a disordered region. The segment at 34–63 (KAKRTLCRNILLYGSCKHSENGCAFRHDGP) adopts a C3H1-type zinc-finger fold. The PABPC-interacting motif-2 (PAM-2) signature appears at 74 to 94 (YSVKKKLNAASASFQPVRALP). Positions 201–457 (EASRQTISAL…NLELFLQNHI (257 aa)) are pseudokinase domain. ATP is bound by residues K255 and 302–309 (DFYPCTTT). The stretch at 458–496 (ESFFPIMSSPYVECEKMERKISDAFQHGRFFNILCKIMF) forms a coiled coil. The tract at residues 497–589 (IIDNNRASRE…DNVYEMEINS (93 aa)) is knob domain.

Belongs to the protein kinase superfamily. PAN3 family. In terms of assembly, homodimer. Forms a heterotrimer with a catalytic subunit pan2 to form the poly(A)-nuclease (PAN) deadenylation complex. Interacts (via PAM-2 motif) with poly(A)-binding protein pab1 (via PABC domain), conferring substrate specificity of the enzyme complex.

The protein resides in the cytoplasm. Its subcellular location is the nucleus. Functionally, regulatory subunit of the poly(A)-nuclease (PAN) deadenylation complex, one of two cytoplasmic mRNA deadenylases involved in mRNA turnover. PAN specifically shortens poly(A) tails of RNA and the activity is stimulated by poly(A)-binding protein pab1. PAN deadenylation is followed by rapid degradation of the shortened mRNA tails by the CCR4-NOT complex. Deadenylated mRNAs are then degraded by two alternative mechanisms, namely exosome-mediated 3'-5' exonucleolytic degradation, or deadenylation-dependent mRNA decaping and subsequent 5'-3' exonucleolytic degradation by xrn1. May also be involved in post-transcriptional maturation of mRNA poly(A) tails. ppk26/pan3 acts as a positive regulator for PAN activity, recruiting the catalytic subunit pan2 to mRNA via its interaction with RNA and with pab1. This chain is PAN2-PAN3 deadenylation complex subunit pan3 (ppk26), found in Schizosaccharomyces pombe (strain 972 / ATCC 24843) (Fission yeast).